We begin with the raw amino-acid sequence, 83 residues long: Bublin coiled-coil protein (83 aa).

Positions 1–24 (MSGPNGDLGMPVEAGAEGEEDGFG) are disordered. The stretch at 25 to 74 (EAEYAAINSMLDQINSCLDHLEEKNDHLHARLQELLESNRQTRLEFQQQL) forms a coiled coil. The residue at position 82 (Ser-82) is a Phosphoserine.

Belongs to the UPF0184 (EST00098) family.

The protein localises to the cell junction. The protein resides in the cytoplasm. Its subcellular location is the cytoskeleton. Functionally, essential for intermediate filament organization in intestinal cells, interacts with intermediate filament and regulates intestinal lumen morphology. This is Bublin coiled-coil protein from Homo sapiens (Human).